The following is a 663-amino-acid chain: Preterminal protein (663 aa).

The short motif at 367 to 376 (SLPLPTRRRR) is the Nuclear localization signal element. A disordered region spans residues 374–414 (RRRVARPAPPSPSPSPEPVELEMPPLEGEEEEEEEELPPRS). The span at 380–390 (PAPPSPSPSPE) shows a compositional bias: pro residues. Residues 400-409 (EGEEEEEEEE) are compositionally biased toward acidic residues. Ser-575 bears the O-(5'-phospho-DNA)-serine mark. A disordered region spans residues 632 to 663 (QLQPMPELNDPVQLPPLRPERQRPPLGPRRPL).

The protein belongs to the adenoviridae terminal protein family. In terms of assembly, heterodimer with the polymerase; this heterodimer binds to bp 9 to 18 of the genome. Interacts with host POU2F1; POU2F1 binds to the auxiliary sequences in the inverted terminal repeats and tethers the pTP-POL heterodimer to the origin DNA thereby participating in the assembly of the pre-initiation complex (POL-TP-DBP-NFIA-POU2F1). Preterminal protein is used to replicate viral genome, upon genomic encapsidation it is processed first into iTP and finally into TP by adenovirus protease.

It localises to the host nucleus matrix. In terms of biological role, protein covalently bound to the viral DNA that acts as a primer for viral genomic replication by DNA strand displacement. Assembles on the viral origin of replication in an initiation complex with viral polymerase, DBP, host NFIA and host POU2F1/OCT1. During initiation, the polymerase covalently couples the first dCTP with Ser-580 of pTP. The terminal protein stimulates the template activity over 20 fold compared to protein-free templates. Neo-synthesized viral genomes are linked to two preterminal proteins, one for each 5' end. These new genomes are encapsidated in the nucleus, and during capsid maturation by viral protease, preterminal protein is first cleaved into intermediary (iTP), then into mature TP. May play a role in host nuclear matrix localization of genomic DNA. This Bos taurus (Bovine) protein is Preterminal protein.